Here is a 288-residue protein sequence, read N- to C-terminus: Phospholipid phosphatase 2 (288 aa).

The Cytoplasmic segment spans residues 1–4 (MQRR). A helical transmembrane segment spans residues 5 to 25 (WVFVLLDVLCLLVASLPFAIL). At 26–51 (TLVNAPYKRGFYCGDDSIRYPYRPDT) the chain is on the lumenal side. The chain crosses the membrane as a helical span at residues 52-72 (ITHGLMAGVTITATVILVSAG). The Cytoplasmic portion of the chain corresponds to 73-87 (EAYLVYTDRLYSRSD). The chain crosses the membrane as a helical span at residues 88–108 (FNNYVAAVYKVLGTFLFGAAV). The Lumenal segment spans residues 109 to 162 (SQSLTDLAKYMIGRLRPNFLAVCDPDWSRVNCSVYVQLEKVCRGNPADVTEARL). Residues 117 to 125 (KYMIGRLRP) are phosphatase sequence motif I. An N-linked (GlcNAc...) asparagine glycan is attached at N139. The helical transmembrane segment at 163-183 (SFYSGHSSFGMYCMVFLALYV) threads the bilayer. Residues 165–168 (YSGH) are phosphatase sequence motif II. Catalysis depends on H168, which acts as the Proton donors. Over 184–196 (QARLCWKWARLLR) the chain is Cytoplasmic. Residues 197–217 (PTVQFFLVAFALYVGYTRVSD) form a helical membrane-spanning segment. The tract at residues 213–224 (TRVSDYKHHWSD) is phosphatase sequence motif III. Topologically, residues 218–226 (YKHHWSDVL) are lumenal. H220 serves as the catalytic Nucleophile. Residues 227 to 247 (VGLLQGALVAALTVCYISDFF) traverse the membrane as a helical segment. At 248-288 (KARPPQHCLKEEELERKPSLSLTLTLGEADHNHYGYPHSSS) the chain is on the cytoplasmic side.

This sequence belongs to the PA-phosphatase related phosphoesterase family. In terms of assembly, forms functional homodimers and homooligomers. Can also form heterooligomers with PLPP1 and PLPP3. Post-translationally, N-glycosylated. Found mainly in brain, pancreas and placenta.

The protein resides in the membrane. It is found in the cell membrane. It localises to the early endosome membrane. Its subcellular location is the endoplasmic reticulum membrane. The catalysed reaction is a 1,2-diacyl-sn-glycero-3-phosphate + H2O = a 1,2-diacyl-sn-glycerol + phosphate. It carries out the reaction 1,2-dihexadecanoyl-sn-glycero-3-phosphate + H2O = 1,2-dihexadecanoyl-sn-glycerol + phosphate. It catalyses the reaction 1,2-di-(9Z-octadecenoyl)-sn-glycero-3-phosphate + H2O = 1,2-di-(9Z-octadecenoyl)-sn-glycerol + phosphate. The enzyme catalyses a monoacyl-sn-glycero-3-phosphate + H2O = a monoacylglycerol + phosphate. The catalysed reaction is (9Z)-octadecenoyl-sn-glycero-3-phosphate + H2O = (9Z-octadecenoyl)-glycerol + phosphate. It carries out the reaction sphing-4-enine 1-phosphate + H2O = sphing-4-enine + phosphate. It catalyses the reaction an N-acylsphing-4-enine 1-phosphate + H2O = an N-acylsphing-4-enine + phosphate. The enzyme catalyses N-(octanoyl)-sphing-4-enine-1-phosphate + H2O = N-octanoylsphing-4-enine + phosphate. The catalysed reaction is N-(9Z-octadecenoyl)-ethanolamine phosphate + H2O = N-(9Z-octadecenoyl) ethanolamine + phosphate. Its pathway is lipid metabolism; phospholipid metabolism. Magnesium-independent phospholipid phosphatase. Insensitive to N-ethylmaleimide. Inhibited by sphingosine, zinc ions and modestly by propanolol. Functionally, magnesium-independent phospholipid phosphatase that catalyzes the dephosphorylation of a variety of glycerolipid and sphingolipid phosphate esters including phosphatidate/PA, lysophosphatidate/LPA, sphingosine 1-phosphate/S1P and ceramide 1-phosphate/C1P. Has no apparent extracellular phosphatase activity and therefore most probably acts intracellularly. Also acts on N-oleoyl ethanolamine phosphate/N-(9Z-octadecenoyl)-ethanolamine phosphate, a potential physiological compound. Through dephosphorylation of these bioactive lipid mediators produces new bioactive compounds and may regulate signal transduction in different cellular processes. Indirectly regulates, for instance, cell cycle G1/S phase transition through its phospholipid phosphatase activity. This Homo sapiens (Human) protein is Phospholipid phosphatase 2.